The following is a 1115-amino-acid chain: DNA-directed RNA polymerase subunit beta (1115 aa).

The tract at residues 1084 to 1115 is disordered; sequence HEAGEGEDDEYFEEDEEAVDDEPMTFDDDDME. Over residues 1088-1115 the composition is skewed to acidic residues; it reads EGEDDEYFEEDEEAVDDEPMTFDDDDME.

This sequence belongs to the RNA polymerase beta chain family. In terms of assembly, the RNAP catalytic core consists of 2 alpha, 1 beta, 1 beta' and 1 omega subunit. When a sigma factor is associated with the core the holoenzyme is formed, which can initiate transcription.

The enzyme catalyses RNA(n) + a ribonucleoside 5'-triphosphate = RNA(n+1) + diphosphate. Functionally, DNA-dependent RNA polymerase catalyzes the transcription of DNA into RNA using the four ribonucleoside triphosphates as substrates. The sequence is that of DNA-directed RNA polymerase subunit beta from Desulfitobacterium hafniense (strain Y51).